We begin with the raw amino-acid sequence, 85 residues long: Large ribosomal subunit protein bL27 (85 aa).

The segment at 1-22 is disordered; sequence MAHKKAGGSSRNGRDSESKRLG.

This sequence belongs to the bacterial ribosomal protein bL27 family.

The protein is Large ribosomal subunit protein bL27 of Tolumonas auensis (strain DSM 9187 / NBRC 110442 / TA 4).